The primary structure comprises 275 residues: Membrane protein insertase YidC (275 aa).

A signal peptide spans 1–22 (MKKYKRLLLMAGLVTLVFVLSA). Residue Cys23 is the site of N-palmitoyl cysteine attachment. Residue Cys23 is the site of S-diacylglycerol cysteine attachment. The next 4 membrane-spanning stretches (helical) occupy residues 53 to 73 (LGGS…IILL), 127 to 147 (YIGC…YQAI), 169 to 189 (YLIL…LSSM), and 206 to 226 (PAMI…YWVV). Residues 249 to 266 (EEAARQAKARERALERAK) are compositionally biased toward basic and acidic residues. The tract at residues 249 to 275 (EEAARQAKARERALERAKSPKKKGKKK) is disordered.

Belongs to the OXA1/ALB3/YidC family. Type 2 subfamily.

The protein resides in the cell membrane. Its function is as follows. Required for the insertion and/or proper folding and/or complex formation of integral membrane proteins into the membrane. Involved in integration of membrane proteins that insert both dependently and independently of the Sec translocase complex, as well as at least some lipoproteins. This Enterococcus faecalis (strain ATCC 700802 / V583) protein is Membrane protein insertase YidC.